Here is a 268-residue protein sequence, read N- to C-terminus: Ribonuclease P protein subunit p30 (268 aa).

Position 2 is an N-acetylalanine (A2). The tract at residues 247–268 (KPRPSEGDEDCLPASKKAKCEG) is disordered. Residue S251 is modified to Phosphoserine.

It belongs to the eukaryotic/archaeal RNase P protein component 3 family. Component of nuclear RNase P and RNase MRP ribonucleoproteins. RNase P consists of a catalytic RNA moiety and about 10 protein subunits; POP1, POP4, POP5, POP7, RPP14, RPP21, RPP25, RPP30, RPP38 and RPP40. Within the RNase P complex, POP1, POP7 and RPP25 form the 'finger' subcomplex, POP5, RPP14, RPP40 and homodimeric RPP30 form the 'palm' subcomplex, and RPP21, POP4 and RPP38 form the 'wrist' subcomplex. All subunits of the RNase P complex interact with the catalytic RNA. Several subunits of RNase P are also part of the RNase MRP complex. RNase MRP consists of a catalytic RNA moiety and about 8 protein subunits; POP1, POP7, RPP25, RPP30, RPP38, RPP40 and possibly also POP4 and POP5.

It is found in the nucleus. It localises to the nucleolus. Functionally, component of ribonuclease P, a ribonucleoprotein complex that generates mature tRNA molecules by cleaving their 5'-ends. Also a component of the MRP ribonuclease complex, which cleaves pre-rRNA sequences. The chain is Ribonuclease P protein subunit p30 (RPP30) from Homo sapiens (Human).